We begin with the raw amino-acid sequence, 151 residues long: Small ribosomal subunit protein uS15 (151 aa).

The tract at residues 1-20 (MGRMHSNGKGISGSSLPYNR) is disordered.

The protein belongs to the universal ribosomal protein uS15 family. Component of the small ribosomal subunit. Part of the small subunit (SSU) processome, composed of more than 70 proteins and the RNA chaperone small nucleolar RNA (snoRNA) U3.

It is found in the cytoplasm. The protein localises to the nucleus. It localises to the nucleolus. In terms of biological role, component of the small ribosomal subunit. The ribosome is a large ribonucleoprotein complex responsible for the synthesis of proteins in the cell. Part of the small subunit (SSU) processome, first precursor of the small eukaryotic ribosomal subunit. During the assembly of the SSU processome in the nucleolus, many ribosome biogenesis factors, an RNA chaperone and ribosomal proteins associate with the nascent pre-rRNA and work in concert to generate RNA folding, modifications, rearrangements and cleavage as well as targeted degradation of pre-ribosomal RNA by the RNA exosome. The sequence is that of Small ribosomal subunit protein uS15 (rps13) from Dictyostelium discoideum (Social amoeba).